A 332-amino-acid chain; its full sequence is Sesquiterpene synthase MBR_10393 (332 aa).

2 residues coordinate Mg(2+): D91 and D96. The DDXXXD motif motif lies at 91–96 (DDLFVD). R184 is a binding site for substrate. Positions 230, 234, and 238 each coordinate Mg(2+).

The protein belongs to the terpene synthase family. Mg(2+) is required as a cofactor.

It carries out the reaction (2E,6E)-farnesyl diphosphate + H2O = (+)-corvol ether B + diphosphate. The catalysed reaction is (2E,6E)-farnesyl diphosphate + H2O = (+)-corvol ether A + diphosphate. Terpene synthase that catalyzes the conversion of (2E,6E)-farnesyl diphosphate (FPP) into sesquiterpenes which are important for fungi-environment interactions. Produces a mixture consisting of 8 sesquiterpenes including corvol ethers A and B, as well as traces of epizonarene, gamma-cadinene, delta-cadinene, alpha-cadinene, alpha-cadinol, and an unidentified sesquiterpene. The major product is corvol ether B. In Metarhizium brunneum (strain ARSEF 3297), this protein is Sesquiterpene synthase MBR_10393.